Consider the following 209-residue polypeptide: Ribosomal RNA large subunit methyltransferase E (209 aa).

S-adenosyl-L-methionine is bound by residues Gly-63, Trp-65, Asp-83, Asp-99, and Asp-124. Lys-164 functions as the Proton acceptor in the catalytic mechanism.

It belongs to the class I-like SAM-binding methyltransferase superfamily. RNA methyltransferase RlmE family.

The protein resides in the cytoplasm. The enzyme catalyses uridine(2552) in 23S rRNA + S-adenosyl-L-methionine = 2'-O-methyluridine(2552) in 23S rRNA + S-adenosyl-L-homocysteine + H(+). Functionally, specifically methylates the uridine in position 2552 of 23S rRNA at the 2'-O position of the ribose in the fully assembled 50S ribosomal subunit. The protein is Ribosomal RNA large subunit methyltransferase E of Pectobacterium atrosepticum (strain SCRI 1043 / ATCC BAA-672) (Erwinia carotovora subsp. atroseptica).